Consider the following 856-residue polypeptide: uncharacterized protein (856 aa).

This is an uncharacterized protein from Rickettsia felis (strain ATCC VR-1525 / URRWXCal2) (Rickettsia azadi).